Consider the following 136-residue polypeptide: Large ribosomal subunit protein uL16c (136 aa).

Belongs to the universal ribosomal protein uL16 family. Part of the 50S ribosomal subunit.

The protein resides in the plastid. It localises to the chloroplast. This Buxus microphylla (Littleleaf boxwood) protein is Large ribosomal subunit protein uL16c.